Here is a 140-residue protein sequence, read N- to C-terminus: Histone H3-like protein (140 aa).

Positions 1-36 (MSRTKQTASKALGGKAPRKGISAKSIPSSGCSPAMP) are disordered. Residue Lys-5 is modified to N6,N6,N6-trimethyllysine; alternate. An N6,N6-dimethyllysine; alternate modification is found at Lys-5. N6-methyllysine; alternate is present on residues Lys-5 and Lys-10. Lys-10, Lys-15, Lys-19, and Lys-24 each carry N6-acetyllysine; alternate. Lys-15 carries the post-translational modification N6,N6-dimethyllysine; alternate. 2 positions are modified to N6-methyllysine; alternate: Lys-19 and Lys-24. Lys-56 and Lys-64 each carry N6-acetyllysine.

It belongs to the histone H3 family. As to quaternary structure, the nucleosome is a histone octamer containing two molecules each of H2A, H2B, H3 and H4 assembled in one H3-H4 heterotetramer and two H2A-H2B heterodimers. The octamer wraps approximately 147 bp of DNA. Post-translationally, mono-, di- and trimethylated to form H3K4me1/2/3. H3K4me activates gene expression by regulating transcription elongation and plays a role in telomere length maintenance. H3K4me enrichment correlates with transcription levels, and occurs in a 5' to 3' gradient with H3K4me3 enrichment at the 5'-end of genes, shifting to H3K4me2 and then H3K4me1. Acetylation of histone H3 leads to transcriptional activation.

It is found in the nucleus. It localises to the chromosome. Functionally, core component of nucleosome. Nucleosomes wrap and compact DNA into chromatin, limiting DNA accessibility to the cellular machineries which require DNA as a template. Histones thereby play a central role in transcription regulation, DNA repair, DNA replication and chromosomal stability. DNA accessibility is regulated via a complex set of post-translational modifications of histones, also called histone code, and nucleosome remodeling. The sequence is that of Histone H3-like protein from Encephalitozoon cuniculi (strain GB-M1) (Microsporidian parasite).